Here is an 885-residue protein sequence, read N- to C-terminus: DNA mismatch repair protein MutS (885 aa).

Position 626–633 (626–633 (GPNMGGKS)) interacts with ATP.

The protein belongs to the DNA mismatch repair MutS family.

Its function is as follows. This protein is involved in the repair of mismatches in DNA. It is possible that it carries out the mismatch recognition step. This protein has a weak ATPase activity. The chain is DNA mismatch repair protein MutS from Burkholderia cenocepacia (strain ATCC BAA-245 / DSM 16553 / LMG 16656 / NCTC 13227 / J2315 / CF5610) (Burkholderia cepacia (strain J2315)).